Consider the following 136-residue polypeptide: Large ribosomal subunit protein uL16 (136 aa).

It belongs to the universal ribosomal protein uL16 family. As to quaternary structure, part of the 50S ribosomal subunit.

Functionally, binds 23S rRNA and is also seen to make contacts with the A and possibly P site tRNAs. The protein is Large ribosomal subunit protein uL16 of Buchnera aphidicola subsp. Cinara cedri (strain Cc).